Reading from the N-terminus, the 339-residue chain is Ferredoxin--NADP reductase (339 aa).

FAD contacts are provided by glutamate 35, glutamine 43, tyrosine 48, valine 88, phenylalanine 122, aspartate 287, and serine 327.

It belongs to the ferredoxin--NADP reductase type 2 family. In terms of assembly, homodimer. Requires FAD as cofactor.

The catalysed reaction is 2 reduced [2Fe-2S]-[ferredoxin] + NADP(+) + H(+) = 2 oxidized [2Fe-2S]-[ferredoxin] + NADPH. This Leuconostoc citreum (strain KM20) protein is Ferredoxin--NADP reductase.